A 471-amino-acid polypeptide reads, in one-letter code: MSEQKIGKITQVIGPVVDVEFEPGQLPNILNACTVTNPGINDVPDNLVIEIAQHLGDNVCRCIAMDQTDGLVRGMVVRDTGLPITIPVGEGALGRIMNVVGRPVDGLGPIPAKTSMSIHRDAPLFTEQDTEVRVLETGIKVIDLLVPFPLGGKMGLFGGAGCGKTVIMMEMVNNIAMHHGGISVFCGVGERTREGNDLYNEMKESGVLPKAALVYGQMTEPPGARARVALTGLTAAEYFRDEEGQDVLFFVDNIFRFTQAGSEVSALLGRIPSAVGYQPTLATDLGALQERITSTNKGSITAVQCVYVPADDLTDPAPATTFAHLDGTVVLSRQISELGIYPAVDPLDSTSRILDPNVIGEEHYDVARGVQVSLQKYKDLQDIIAILGMDELSEEDQQLVSRARKIQRYLSQPFTVAEVFTGMPGKFVKVADTVQGFKEILEGKHDALNENSFYMVGSIDEAVAKDAASKA.

ATP is bound at residue 158–165 (GGAGCGKT).

Belongs to the ATPase alpha/beta chains family. In terms of assembly, F-type ATPases have 2 components, CF(1) - the catalytic core - and CF(0) - the membrane proton channel. CF(1) has five subunits: alpha(3), beta(3), gamma(1), delta(1), epsilon(1). CF(0) has three main subunits: a(1), b(2) and c(9-12). The alpha and beta chains form an alternating ring which encloses part of the gamma chain. CF(1) is attached to CF(0) by a central stalk formed by the gamma and epsilon chains, while a peripheral stalk is formed by the delta and b chains.

The protein localises to the cell inner membrane. It catalyses the reaction ATP + H2O + 4 H(+)(in) = ADP + phosphate + 5 H(+)(out). Produces ATP from ADP in the presence of a proton gradient across the membrane. The catalytic sites are hosted primarily by the beta subunits. The sequence is that of ATP synthase subunit beta from Desulfotalea psychrophila (strain LSv54 / DSM 12343).